A 267-amino-acid polypeptide reads, in one-letter code: MASTEEIPRSLAGKVALITGAGRGIGKGIAIELAKRGASVIVNYNSADKPAQEVVDEIAKTGSRAIAIKADITKVPEVSRLFQEALQHFGHLDIVVSNSGTEVFKPEEEVTEEDYDRVFNLNTRAQFFVAQHAYIHLRNGGRIILMSSVAANMSGIPNHALYAGSKAAVEGFTRSFAVDAGHKKITVNAIAPGGVKTDMYDANAWHYVPGGKPGMPMEEIDKGLAAFCPLERVAVPQDIGRVVAFLAHPDSEWVNGQIILLTGGSIT.

NADP(+) is bound by residues I25, N45, D71, and N98. Active-site proton donor residues include S147 and S148. Residues Y162, K166, V195, and T197 each coordinate NADP(+). Y162 serves as the catalytic Proton acceptor. The Lowers pKa of active site Tyr role is filled by K166.

This sequence belongs to the short-chain dehydrogenases/reductases (SDR) family.

In terms of biological role, hydroxynaphthalene reductase-like protein; part of the Pks2 gene cluster that mediates the formation of infectious structures (appressoria), enabling these fungi to kill insects faster. The product of the Pks2 gene cluster is different from the one of Pks1 and has still not been identified. This chain is Hydroxynaphthalene reductase-like protein Arp2, found in Metarhizium acridum (strain CQMa 102).